The sequence spans 558 residues: REST corepressor spr-1 (558 aa).

The segment at 1–106 (MDLYDDDGES…KVKGPLSNTN (106 aa)) is disordered. Residues 36–56 (TIEENVPEVEENTLLEEDSLV) show a composition bias toward acidic residues. The segment covering 69 to 80 (KPSKSKRKRKRS) has biased composition (basic residues). One can recognise an ELM2 domain in the interval 107–192 (KEINVGTEFQ…SAIAEVARRN (86 aa)). Residues 193-244 (ELKDVWTDQEITLFENCYQIFGKNFSQIRSALCHRSLQSIVQFYYESKKRVK) enclose the SANT 1 domain. The segment at 271 to 325 (AIFESMCDNCGEKAENMQINNAMNRPECRACLIYFNQTGVPRPTSLRLVLAERIR) adopts a GATA-type zinc-finger fold. Residues 378-402 (CTENGNVGETSSPSAQKTEIQSESD) are compositionally biased toward polar residues. Positions 378–406 (CTENGNVGETSSPSAQKTEIQSESDGSGP) are disordered. In terms of domain architecture, SANT 2 spans 481–532 (HYSQDWTQLERSQVIRCFNMYGAHFEHIADVIGTKTPDQVYQFYLENQKAID).

It belongs to the CoREST family. As to quaternary structure, probably part of a large repressor complex. Interacts with histone demethylase spr-5/lsd-1.

It is found in the nucleus. Its function is as follows. Probable corepressor protein, which probably participates in the transcriptional repression of the presenilin protein hop-1. Probably acts via the formation of a multiprotein complex that deacetylates and demethylates specific sites on histones. Acts redundantly with the transcriptional repressor lin-35 to play a role in vulval morphogenesis and promote germline proliferation. This Caenorhabditis elegans protein is REST corepressor spr-1.